The following is a 1368-amino-acid chain: DNA-directed RNA polymerase subunit beta (1368 aa).

It belongs to the RNA polymerase beta chain family. In terms of assembly, the RNAP catalytic core consists of 2 alpha, 1 beta, 1 beta' and 1 omega subunit. When a sigma factor is associated with the core the holoenzyme is formed, which can initiate transcription.

It catalyses the reaction RNA(n) + a ribonucleoside 5'-triphosphate = RNA(n+1) + diphosphate. DNA-dependent RNA polymerase catalyzes the transcription of DNA into RNA using the four ribonucleoside triphosphates as substrates. This chain is DNA-directed RNA polymerase subunit beta, found in Desulfosudis oleivorans (strain DSM 6200 / JCM 39069 / Hxd3) (Desulfococcus oleovorans).